The chain runs to 251 residues: Hydroxyacylglutathione hydrolase (251 aa).

The Zn(2+) site is built by H53, H55, D57, H58, H110, D127, and H165.

This sequence belongs to the metallo-beta-lactamase superfamily. Glyoxalase II family. As to quaternary structure, monomer. The cofactor is Zn(2+).

The catalysed reaction is an S-(2-hydroxyacyl)glutathione + H2O = a 2-hydroxy carboxylate + glutathione + H(+). It functions in the pathway secondary metabolite metabolism; methylglyoxal degradation; (R)-lactate from methylglyoxal: step 2/2. In terms of biological role, thiolesterase that catalyzes the hydrolysis of S-D-lactoyl-glutathione to form glutathione and D-lactic acid. The sequence is that of Hydroxyacylglutathione hydrolase from Escherichia coli O6:K15:H31 (strain 536 / UPEC).